The chain runs to 256 residues: 5-keto-4-deoxy-D-glucarate aldolase (256 aa).

The active-site Proton acceptor is H50. Q151 provides a ligand contact to substrate. E153 contacts Mg(2+). Substrate contacts are provided by S178 and D179. Residue D179 coordinates Mg(2+).

This sequence belongs to the HpcH/HpaI aldolase family. KDGluc aldolase subfamily. As to quaternary structure, homohexamer; trimer of dimers. Requires Mg(2+) as cofactor.

It catalyses the reaction 5-dehydro-4-deoxy-D-glucarate = 2-hydroxy-3-oxopropanoate + pyruvate. The enzyme catalyses 2-dehydro-3-deoxy-D-glucarate = 2-hydroxy-3-oxopropanoate + pyruvate. Its pathway is carbohydrate acid metabolism; galactarate degradation; D-glycerate from galactarate: step 2/3. Its function is as follows. Catalyzes the reversible retro-aldol cleavage of both 5-keto-4-deoxy-D-glucarate and 2-keto-3-deoxy-D-glucarate to pyruvate and tartronic semialdehyde. This chain is 5-keto-4-deoxy-D-glucarate aldolase, found in Salmonella paratyphi C (strain RKS4594).